A 394-amino-acid chain; its full sequence is Elongation factor Tu (394 aa).

Positions 10–204 (KPHINVGTIG…SLDKYIPIPV (195 aa)) constitute a tr-type G domain. Residues 19–26 (GHVDHGKT) are G1. 19–26 (GHVDHGKT) is a binding site for GTP. Thr26 contacts Mg(2+). Positions 60-64 (GITIN) are G2. The segment at 81 to 84 (DCPG) is G3. GTP-binding positions include 81-85 (DCPGH) and 136-139 (NKCD). The segment at 136–139 (NKCD) is G4. The tract at residues 174 to 176 (SAL) is G5.

This sequence belongs to the TRAFAC class translation factor GTPase superfamily. Classic translation factor GTPase family. EF-Tu/EF-1A subfamily. In terms of assembly, monomer.

It localises to the cytoplasm. It catalyses the reaction GTP + H2O = GDP + phosphate + H(+). Its function is as follows. GTP hydrolase that promotes the GTP-dependent binding of aminoacyl-tRNA to the A-site of ribosomes during protein biosynthesis. The protein is Elongation factor Tu of Buchnera aphidicola subsp. Cinara cedri (strain Cc).